The primary structure comprises 132 residues: Glycine-rich protein 3 (132 aa).

The first 20 residues, 1 to 20, serve as a signal peptide directing secretion; the sequence is MRYAVLLAVVLLLGAFTAEA.

Prismatic layer of shell (at protein level). Expressed primarily in the mantle with highest level in the mantle edge and lower level in the mantle pallium.

The protein resides in the secreted. This is Glycine-rich protein 3 from Pinctada maxima (Silver-lipped pearl oyster).